The primary structure comprises 137 residues: Large-conductance mechanosensitive channel (137 aa).

2 consecutive transmembrane segments (helical) span residues 10 to 30 (FAMRGNVVDLAVGVIIGAAFG) and 76 to 96 (GVFIQNVFDFIIVAFAIFMAI).

The protein belongs to the MscL family. As to quaternary structure, homopentamer.

It is found in the cell inner membrane. Channel that opens in response to stretch forces in the membrane lipid bilayer. May participate in the regulation of osmotic pressure changes within the cell. This chain is Large-conductance mechanosensitive channel, found in Klebsiella pneumoniae subsp. pneumoniae (strain ATCC 700721 / MGH 78578).